The sequence spans 712 residues: U11/U12 small nuclear ribonucleoprotein 48 kDa protein (712 aa).

Residues 98–125 (FVRCPFDSNHFMPPEALFLHSLRCPNTL) form a CHHC U11-48K-type zinc finger. The Zn(2+) site is built by Cys101, His107, His117, and Cys121. The disordered stretch occupies residues 562 to 712 (QSRSPIGNDQ…EDRYIPTEKE (151 aa)). Basic and acidic residues-rich tracts occupy residues 585–595 (KQWKGENRADI), 603–614 (QNSDKVKRHDEY), 629–663 (KHSDRRDDKLRDRRKDKHNDRRDDEFTRTKRHSIE), 672–693 (SSREKSSSDYKTKRDDPYDRRS), and 702–712 (FEDRYIPTEKE).

In terms of assembly, component of the U11/U12 snRNPs that are part of the U12-type spliceosome. Not found in the major spliceosome.

Its subcellular location is the nucleus. In terms of biological role, likely involved in U12-type 5' splice site recognition. This is U11/U12 small nuclear ribonucleoprotein 48 kDa protein (SNRNP48) from Arabidopsis thaliana (Mouse-ear cress).